The primary structure comprises 806 residues: MGIVALILIKAAMSLILSSFPLFRSSRSSPASASLAGSGLPKTTPPKTASLQSHSPMFEETKGRIAKLFKKNEVCISTYDTAWVGMVPSPFSSDQPCFPDSLFWLLDNQCPDGSWAQPHHHSHSHSPSLLNKDVLSSTLASILALHKWGLGQHHIAKGLHFLELNFASATDNSQITPLGFDIVFPAMLDHAADLSLNLRLDPTTLNDLMNRRDLELQRCTENGSAETEVYMAYIGEGMGKLHDWESVMKYQRKNGSLFNSPSTTAAAFIALRNSDCLNYLYSALNKFGSAVPAVYPLDIYSQLCIVDNLERLGISRFFSTEIQSVLDETYRCWLQGDEEIIMDASTCGLAFRTLRMNGYKVTSDSFIKVVQDCFSSPGHMRDVNTTLELYRASELMLYPHEIELEKQNSRLRSLLEQELSGGSIQSSQLNAEVKQALDYPFYAALDRMVKKKTIEHYNIDDSRILKTSFRLPSFGNKDLLSLSVQDYNRCQAIHREELREFDRWFVENRLDELEFARHKSAYYYCYFAAAATFFAPELSDARMSWAKNALMTTMVDDLFDVTGSVEEMKNLIQLVELWDVDVSTECCSHKVQILFSALKRTICEVGDRAHQLQGRSIRSHIIVIWLDLLHSMMKEVEWTRDKFVPTMDEYVSNAHVSFALGPIVLPALYLVGPKLSEEMVNHSEYHNLFKLMSMCGRLMNDIRGYEREHDDGKLNAMSLYIMNNGGEITPEVAILEIKSWNDRHRRDLLRLVLEEKSVIPKACKDLFWHMCSVVHLFYNKDDGFWSQELIEVVNQVIHQPILLNHF.

The N-terminal 75 residues, 1–75, are a transit peptide targeting the chloroplast; sequence MGIVALILIK…AKLFKKNEVC (75 aa). The tract at residues 33–56 is disordered; it reads ASLAGSGLPKTTPPKTASLQSHSP. The span at 45 to 55 shows a compositional bias: polar residues; that stretch reads PPKTASLQSHS. Residues D556, D560, N700, and E708 each contribute to the Mg(2+) site. The DDXXD motif motif lies at 556–560; the sequence is DDLFD.

It belongs to the terpene synthase family. Mg(2+) is required as a cofactor. As to expression, highly expressed in leaves, and, at low levels, in roots, stems and flowers.

The protein resides in the plastid. It is found in the chloroplast. The enzyme catalyses ent-copalyl diphosphate = ent-atiserene + diphosphate. It functions in the pathway secondary metabolite biosynthesis; terpenoid biosynthesis. Functionally, involved in the biosynthesis of ent-kaurene diterpenoids natural products such as oridonin, miltiradiene, eriocalyxin B and nezukol, known to exhibit antitumor, anti-inflammatory and antibacterial activities. Catalyzes the conversion of ent-copalyl diphosphate (ent-CPP) to ent-atiserene. In Isodon rubescens (Rabdosia rubescens), this protein is Ent-atiserene synthase KSL4, chloroplastic.